Here is a 104-residue protein sequence, read N- to C-terminus: Secretoglobin family 3A member 1 (104 aa).

The signal sequence occupies residues 1–21; the sequence is MKLTTTFLVLCVALLSDSGVA.

Belongs to the secretoglobin family. UGRP subfamily. Homodimer; disulfide-linked. In terms of tissue distribution, highly expressed in lung, where it localizes to epithelial cells lining the trachea and bronchi. Expression in lung is mainly restricted to bronchi, submucosal glands of the trachea, and tracheal epithelium, with little expression in terminal bronchioles. Expressed in uterus where it localizes to epithelial cells of the uterine glands. Also detected in heart, stomach and small intestine.

It is found in the secreted. Functionally, secreted cytokine-like protein. Inhibits cell growth in vitro. The chain is Secretoglobin family 3A member 1 (Scgb3a1) from Mus musculus (Mouse).